Consider the following 140-residue polypeptide: Ribosome maturation factor RimP (140 aa).

The protein belongs to the RimP family.

The protein resides in the cytoplasm. Functionally, required for maturation of 30S ribosomal subunits. The chain is Ribosome maturation factor RimP from Campylobacter jejuni subsp. jejuni serotype O:23/36 (strain 81-176).